Here is a 253-residue protein sequence, read N- to C-terminus: Chitooligosaccharide deacetylase (253 aa).

Residues histidine 61 and histidine 126 each coordinate Mg(2+).

The protein belongs to the YdjC deacetylase family. ChbG subfamily. Homodimer. Requires Mg(2+) as cofactor.

It is found in the cytoplasm. The catalysed reaction is N,N'-diacetylchitobiose + H2O = N-acetyl-beta-D-glucosaminyl-(1-&gt;4)-D-glucosamine + acetate. It catalyses the reaction diacetylchitobiose-6'-phosphate + H2O = N'-monoacetylchitobiose-6'-phosphate + acetate. Its pathway is glycan degradation; chitin degradation. Involved in the degradation of chitin. ChbG is essential for growth on the acetylated chitooligosaccharides chitobiose and chitotriose but is dispensable for growth on cellobiose and chitosan dimer, the deacetylated form of chitobiose. Deacetylation of chitobiose-6-P and chitotriose-6-P is necessary for both the activation of the chb promoter by the regulatory protein ChbR and the hydrolysis of phosphorylated beta-glucosides by the phospho-beta-glucosidase ChbF. Catalyzes the removal of only one acetyl group from chitobiose-6-P to yield monoacetylchitobiose-6-P, the inducer of ChbR and the substrate of ChbF. This Yersinia pseudotuberculosis serotype O:1b (strain IP 31758) protein is Chitooligosaccharide deacetylase.